Consider the following 302-residue polypeptide: Probable lipid kinase YegS-like (302 aa).

The DAGKc domain maps to 1–129; that stretch reads MDKDKVLLVL…IDLGAVNGKL (129 aa). Residues Thr39, 65–71, and Thr92 contribute to the ATP site; that span reads GDGTLRE. Mg(2+) is bound by residues Arg210, Asp213, and Leu215. Glu268 (proton acceptor) is an active-site residue.

Belongs to the diacylglycerol/lipid kinase family. YegS lipid kinase subfamily. Requires Mg(2+) as cofactor. The cofactor is Ca(2+).

It localises to the cytoplasm. Its function is as follows. Probably phosphorylates lipids; the in vivo substrate is unknown. The protein is Probable lipid kinase YegS-like of Pseudomonas aeruginosa (strain UCBPP-PA14).